The sequence spans 263 residues: Pollen allergen Phl p 1 (263 aa).

The N-terminal stretch at 1–23 is a signal peptide; sequence MASSSSVLLVVVLFAVFLGSAYG. Asn-32 carries N-linked (GlcNAc...) asparagine glycosylation. The region spanning 61–167 is the Expansin-like EG45 domain; sequence GGACGYKDVD…RRVKCKYPEG (107 aa). 3 disulfide bridges follow: Cys-64–Cys-92, Cys-95–Cys-162, and Cys-100–Cys-106. Residues 181–262 form the Expansin-like CBD domain; it reads NYLALLVKYV…GWKADTSYES (82 aa).

Belongs to the expansin family. Expansin B subfamily. As to quaternary structure, homodimer.

It localises to the secreted. The protein is Pollen allergen Phl p 1 (PHLPI) of Phleum pratense (Common timothy).